The chain runs to 449 residues: Probable cysteine proteinase 224L (449 aa).

Active-site residues include Cys-99, His-292, and Asn-322. A helical transmembrane segment spans residues 429-449 (DTQIVFIFFLSVVILFIFIIL).

Belongs to the peptidase C1 family.

Its subcellular location is the membrane. Its function is as follows. Probable cysteine protease. The polypeptide is Probable cysteine proteinase 224L (Acheta domesticus (House cricket)).